The sequence spans 348 residues: 4-hydroxyphenylpyruvate dioxygenase (348 aa).

VOC domains follow at residues 11–141 and 151–303; these read GFAF…ITSS and AIDH…IFTE. The Fe cation site is built by histidine 154, histidine 232, and glutamate 312.

The protein belongs to the 4HPPD family. Fe cation serves as cofactor.

It carries out the reaction 3-(4-hydroxyphenyl)pyruvate + O2 = homogentisate + CO2. Its function is as follows. Catalyzes the transformation of p-hydroxyphenylpyruvate into HGA. Has hemolytic and brown pigment production activity. In Legionella pneumophila (strain Corby), this protein is 4-hydroxyphenylpyruvate dioxygenase (lly).